We begin with the raw amino-acid sequence, 462 residues long: CUGBP Elav-like family member 3-B (462 aa).

RRM domains follow at residues 7–88 (IKLF…PADS), 95–175 (RKLF…FADT), and 377–455 (CNIF…LKRP).

The protein belongs to the CELF/BRUNOL family.

It is found in the nucleus. Its subcellular location is the cytoplasm. Functionally, RNA-binding protein that may be involved in the regulation of pre-mRNA alternative splicing. This chain is CUGBP Elav-like family member 3-B (tnrc4-b), found in Xenopus laevis (African clawed frog).